The primary structure comprises 101 residues: Small ribosomal subunit protein uS14 (101 aa).

This sequence belongs to the universal ribosomal protein uS14 family. In terms of assembly, part of the 30S ribosomal subunit. Contacts proteins S3 and S10.

In terms of biological role, binds 16S rRNA, required for the assembly of 30S particles and may also be responsible for determining the conformation of the 16S rRNA at the A site. The sequence is that of Small ribosomal subunit protein uS14 from Xylella fastidiosa (strain M23).